A 322-amino-acid polypeptide reads, in one-letter code: Quinolinate synthase (322 aa).

His-38 and Ser-55 together coordinate iminosuccinate. Cys-100 lines the [4Fe-4S] cluster pocket. Residues 126-128 (YIN) and Ser-143 contribute to the iminosuccinate site. Residue Cys-186 participates in [4Fe-4S] cluster binding. Residues 212 to 214 (HPE) and Thr-229 each bind iminosuccinate. Cys-279 contacts [4Fe-4S] cluster.

This sequence belongs to the quinolinate synthase family. Type 2 subfamily. The cofactor is [4Fe-4S] cluster.

Its subcellular location is the cytoplasm. It catalyses the reaction iminosuccinate + dihydroxyacetone phosphate = quinolinate + phosphate + 2 H2O + H(+). The protein operates within cofactor biosynthesis; NAD(+) biosynthesis; quinolinate from iminoaspartate: step 1/1. Its function is as follows. Catalyzes the condensation of iminoaspartate with dihydroxyacetone phosphate to form quinolinate. The polypeptide is Quinolinate synthase (Cyanothece sp. (strain PCC 7425 / ATCC 29141)).